Here is a 343-residue protein sequence, read N- to C-terminus: Palmitoyltransferase ZDHHC4 (343 aa).

Residues 1–2 (MD) lie on the Lumenal side of the membrane. The helical transmembrane segment at 3–23 (FLVLFSFYLAFLLICVIMICI) threads the bilayer. Residues 24–67 (FTKSQRLKAVVLGGAQVCARVTPQCFQRAVQTLLHQLFHTRHPA) are Cytoplasmic-facing. A helical transmembrane segment spans residues 68 to 88 (FLALHLLLQGLVYAEYTYEVF). Topologically, residues 89–95 (SYCRELE) are lumenal. Residues 96–116 (FSLPCLLLPYVLLSVNLVFFT) traverse the membrane as a helical segment. Residues 117-193 (LTCSTNPGTI…NCIGAWNTGY (77 aa)) lie on the Cytoplasmic side of the membrane. Positions 149–199 (SRCSTCDLRKPARSKHCRVCDRCVHRFDHHCVWVNNCIGAWNTGYFLIYLL) constitute a DHHC domain. Cysteine 179 serves as the catalytic S-palmitoyl cysteine intermediate. A helical transmembrane segment spans residues 194–214 (FLIYLLTLTASAATIAILSAA). Residues 215 to 255 (FLLRLVAVSNLYQETYLDDLGRFQAVDTGFLIQHLFLAFPR) are Lumenal-facing. The chain crosses the membrane as a helical span at residues 256–276 (IIFLLGFVIVLSLLLAGYLCF). Residues 277–343 (ALYLAATNQT…ATPSYKKKKR (67 aa)) are Cytoplasmic-facing. Residues 340-343 (KKKR) carry the Di-lysine motif motif.

The protein belongs to the DHHC palmitoyltransferase family. Interacts with CPT1A.

It is found in the endoplasmic reticulum membrane. It localises to the golgi apparatus membrane. The protein resides in the cell membrane. It carries out the reaction L-cysteinyl-[protein] + hexadecanoyl-CoA = S-hexadecanoyl-L-cysteinyl-[protein] + CoA. Palmitoyltransferase that could catalyze the addition of palmitate onto protein substrates including the D(2) dopamine receptor DRD2, GSK3B or MAVS. Mediates GSK3B palmitoylation to prevent its AKT1-mediated phosphorylation leading to activation of the STAT3 signaling pathway. Also catalyzes MAVS palmitoylation which promotes its stabilization and activation by inhibiting 'Lys-48'- but facilitating 'Lys-63'-linked ubiquitination. In Rattus norvegicus (Rat), this protein is Palmitoyltransferase ZDHHC4.